The chain runs to 353 residues: Photosystem II D2 protein (353 aa).

T2 is modified (N-acetylthreonine). A Phosphothreonine modification is found at T2. A helical membrane pass occupies residues 41–61 (CAYFALGGWFTGTTFVTSWYT). Chlorophyll a is bound at residue H118. The chain crosses the membrane as a helical span at residues 125-141 (GFMLRQFELARSVQLRP). Q130 and N143 together coordinate pheophytin a. A helical membrane pass occupies residues 153–166 (VFVSVFLIYPLGQS). H198 contacts chlorophyll a. A helical transmembrane segment spans residues 208–228 (AALLCAIHGATVENTLFEDGD). Residues H215 and F262 each coordinate a plastoquinone. H215 contributes to the Fe cation binding site. H269 lines the Fe cation pocket. Residues 279–295 (GLWMSALGVVGLALNLR) form a helical membrane-spanning segment.

This sequence belongs to the reaction center PufL/M/PsbA/D family. PSII is composed of 1 copy each of membrane proteins PsbA, PsbB, PsbC, PsbD, PsbE, PsbF, PsbH, PsbI, PsbJ, PsbK, PsbL, PsbM, PsbT, PsbX, PsbY, PsbZ, Psb30/Ycf12, at least 3 peripheral proteins of the oxygen-evolving complex and a large number of cofactors. It forms dimeric complexes. Interacts with PAM68. The D1/D2 heterodimer binds P680, chlorophylls that are the primary electron donor of PSII, and subsequent electron acceptors. It shares a non-heme iron and each subunit binds pheophytin, quinone, additional chlorophylls, carotenoids and lipids. There is also a Cl(-1) ion associated with D1 and D2, which is required for oxygen evolution. The PSII complex binds additional chlorophylls, carotenoids and specific lipids. is required as a cofactor. Post-translationally, phosphorylation occurs in normal plant growth light conditions. Rapid dephosphorylation occurs during heat shock.

Its subcellular location is the plastid. The protein localises to the chloroplast thylakoid membrane. It carries out the reaction 2 a plastoquinone + 4 hnu + 2 H2O = 2 a plastoquinol + O2. In terms of biological role, photosystem II (PSII) is a light-driven water:plastoquinone oxidoreductase that uses light energy to abstract electrons from H(2)O, generating O(2) and a proton gradient subsequently used for ATP formation. It consists of a core antenna complex that captures photons, and an electron transfer chain that converts photonic excitation into a charge separation. The D1/D2 (PsbA/PsbD) reaction center heterodimer binds P680, the primary electron donor of PSII as well as several subsequent electron acceptors. D2 is needed for assembly of a stable PSII complex. The protein is Photosystem II D2 protein of Arabidopsis thaliana (Mouse-ear cress).